We begin with the raw amino-acid sequence, 373 residues long: Dual-specificity RNA methyltransferase RlmN (373 aa).

The active-site Proton acceptor is E94. Positions 100–339 (EDDRATLCVS…VTIRKTRGDD (240 aa)) constitute a Radical SAM core domain. The cysteines at positions 107 and 344 are disulfide-linked. [4Fe-4S] cluster is bound by residues C114, C118, and C121. S-adenosyl-L-methionine is bound by residues 168–169 (GE), S200, 222–224 (SLH), and N301. Catalysis depends on C344, which acts as the S-methylcysteine intermediate.

It belongs to the radical SAM superfamily. RlmN family. [4Fe-4S] cluster is required as a cofactor.

It is found in the cytoplasm. The enzyme catalyses adenosine(2503) in 23S rRNA + 2 reduced [2Fe-2S]-[ferredoxin] + 2 S-adenosyl-L-methionine = 2-methyladenosine(2503) in 23S rRNA + 5'-deoxyadenosine + L-methionine + 2 oxidized [2Fe-2S]-[ferredoxin] + S-adenosyl-L-homocysteine. It catalyses the reaction adenosine(37) in tRNA + 2 reduced [2Fe-2S]-[ferredoxin] + 2 S-adenosyl-L-methionine = 2-methyladenosine(37) in tRNA + 5'-deoxyadenosine + L-methionine + 2 oxidized [2Fe-2S]-[ferredoxin] + S-adenosyl-L-homocysteine. Functionally, specifically methylates position 2 of adenine 2503 in 23S rRNA and position 2 of adenine 37 in tRNAs. m2A2503 modification seems to play a crucial role in the proofreading step occurring at the peptidyl transferase center and thus would serve to optimize ribosomal fidelity. In Vibrio cholerae serotype O1 (strain M66-2), this protein is Dual-specificity RNA methyltransferase RlmN.